Reading from the N-terminus, the 489-residue chain is Mitochondrial-processing peptidase subunit beta (489 aa).

Residues 1 to 45 (MAAAAVSRTLLPVAGRRLWGFTRRLPLRAAAAQPLYFGGDRLRST) constitute a mitochondrion transit peptide. His-101 provides a ligand contact to Zn(2+). Glu-104 (proton acceptor) is an active-site residue. Residues His-105 and Glu-181 each contribute to the Zn(2+) site.

The protein belongs to the peptidase M16 family. As to quaternary structure, heterodimer of PMPCA (alpha) and PMPCB (beta) subunits, forming the mitochondrial processing protease (MPP) in which PMPCA is involved in substrate recognition and binding and PMPCB is the catalytic subunit. The cofactor is Zn(2+).

The protein localises to the mitochondrion matrix. It carries out the reaction Release of N-terminal transit peptides from precursor proteins imported into the mitochondrion, typically with Arg in position P2.. Its activity is regulated as follows. Binding to PMPCA is required for catalytic activity. Its function is as follows. Catalytic subunit of the essential mitochondrial processing protease (MPP), which cleaves the mitochondrial sequence off newly imported precursors proteins. Preferentially, cleaves after an arginine at position P2. Required for PINK1 turnover by coupling PINK1 mitochondrial import and cleavage, which results in subsequent PINK1 proteolysis. The chain is Mitochondrial-processing peptidase subunit beta (Pmpcb) from Rattus norvegicus (Rat).